A 1269-amino-acid chain; its full sequence is Phospholipase D A (1269 aa).

The span at 55–64 shows a compositional bias: polar residues; the sequence is YTSVGSAPTT. The interval 55–121 is disordered; the sequence is YTSVGSAPTT…NNNLQSPTQS (67 aa). Composition is skewed to low complexity over residues 65-87 and 95-114; these read NNNS…SGSS and NSNK…NNNN. Positions 131–192 form a coiled coil; the sequence is SKALHDFEEK…ELKSLDELLH (62 aa). Residues 222–232 show a composition bias toward polar residues; that stretch reads NSVTNNTPSSA. Disordered regions lie at residues 222–269 and 300–320; these read NSVT…SSST and NSYP…DPNL. The span at 233 to 269 shows a compositional bias: low complexity; the sequence is TPLTLSNNNNYTSSSLATSPTTNSSSSSSSSSSSSST. PLD phosphodiesterase domains lie at 435-462 and 704-731; these read IYWS…CFGR and EQIY…NDRS. Catalysis depends on residues His-440, Lys-442, Asp-447, His-709, Lys-711, and Asp-716. Residues 803–835 are a coiled coil; the sequence is NNNNNSNINNNINNNNNEINNNNNNNNNNNSNE. Composition is skewed to low complexity over residues 810-850, 859-906, and 934-943; these read INNN…NSNS, NLPP…GTTN, and SSPQDSPQDS. Disordered stretches follow at residues 810 to 966 and 983 to 1007; these read INNN…HQSP and SNEQ…TTTD. The span at 987–1003 shows a compositional bias: pro residues; it reads LPPPPSSTTPPPPPPPL. Positions 1059 to 1096 form a coiled coil; that stretch reads TTAQQQQQQQQQQQQQQQQQQQQQQQQQQQQQQQQQQQ. A disordered region spans residues 1116-1167; the sequence is IKKKRSSISPSTSSNKLLLSGNGSGDSIRVVTDSGSSPRGQPRSMSSLHDHA. Positions 1122-1142 are enriched in low complexity; it reads SISPSTSSNKLLLSGNGSGDS. Polar residues predominate over residues 1148 to 1162; the sequence is DSGSSPRGQPRSMSS.

The protein belongs to the phospholipase D family.

It catalyses the reaction a 1,2-diacyl-sn-glycero-3-phosphocholine + H2O = a 1,2-diacyl-sn-glycero-3-phosphate + choline + H(+). Inhibited by butan-1-ol. Its function is as follows. Plays a role in cell growth. Hydrolyzes membrane phospholipids, such as PtdCho free headgroup and PtdOH (phosphatidic acid; signaling molecule on its own). Involved in the inhibition of actin-based motility and endocytosis. Its inhibition causes complete collapse of F-actin organization. This chain is Phospholipase D A (pldA), found in Dictyostelium discoideum (Social amoeba).